The sequence spans 188 residues: Pro-adrenomedullin (188 aa).

The first 21 residues, 1–21 (MKLVPVALLYLGSLAFLGADT), serve as a signal peptide directing secretion. Residue arginine 41 is modified to Arginine amide. Positions 45–92 (ELRVSSSYPTGLAEVKAGPAQTLIRTQDVKGASRNPQTSGPDAARIRV) are excised as a propeptide. The cysteines at positions 110 and 115 are disulfide-linked. A disordered region spans residues 131–176 (DKDGVAPRSKISPQGYGRRRRRSLPEPGLRRTLLFPEPRPGGAPAP). At tyrosine 146 the chain carries Tyrosine amide. Positions 153–188 (SLPEPGLRRTLLFPEPRPGGAPAPRAHQVLANLLKM) are cleaved as a propeptide — preproAM C-terminal fragment.

Belongs to the adrenomedullin family.

It is found in the secreted. Adrenomedullin/ADM and proadrenomedullin N-20 terminal peptide/PAMP are peptide hormones that act as potent hypotensive and vasodilatator agents. Numerous actions have been reported most related to the physiologic control of fluid and electrolyte homeostasis. Its function is as follows. ADM function is mediated by the CALCRL-RAMP2 and CALCRL-RAMP3 receptor complexes with ADM showing the highest potency for the CALCRL-RAMP2 complex. The sequence is that of Pro-adrenomedullin (ADM) from Canis lupus familiaris (Dog).